The following is a 109-amino-acid chain: Large ribosomal subunit protein uL24 (109 aa).

This sequence belongs to the universal ribosomal protein uL24 family. In terms of assembly, part of the 50S ribosomal subunit.

One of two assembly initiator proteins, it binds directly to the 5'-end of the 23S rRNA, where it nucleates assembly of the 50S subunit. Its function is as follows. One of the proteins that surrounds the polypeptide exit tunnel on the outside of the subunit. The sequence is that of Large ribosomal subunit protein uL24 from Legionella pneumophila (strain Paris).